Consider the following 219-residue polypeptide: MIDLKTKAFDIAQNFTISLDGPAASGKGTVGLILAKKFSLKYFQSSIVYRQLAFNCINQQIDITDIDAVIALSKELKLDNNIDLENEDIGDIASQIAVISDVRNNLNENLINLVKTTPRIIMEGRDIGTVVAPDADLKIFITASPYVRAIRRYNQLQAKGKTCILDEIIQQIILRDKRDKERKAGPLLPALGAFIIDTSKLSAIEIVEEVTNYIKNKIT.

An ATP-binding site is contributed by 21–29; that stretch reads GPAASGKGT.

The protein belongs to the cytidylate kinase family. Type 1 subfamily.

The protein resides in the cytoplasm. The enzyme catalyses CMP + ATP = CDP + ADP. It carries out the reaction dCMP + ATP = dCDP + ADP. The polypeptide is Cytidylate kinase (Rickettsia prowazekii (strain Madrid E)).